A 134-amino-acid polypeptide reads, in one-letter code: Small ribosomal subunit protein uS11 (134 aa).

Belongs to the universal ribosomal protein uS11 family. Part of the 30S ribosomal subunit. Interacts with proteins S7 and S18. Binds to IF-3.

In terms of biological role, located on the platform of the 30S subunit, it bridges several disparate RNA helices of the 16S rRNA. Forms part of the Shine-Dalgarno cleft in the 70S ribosome. This chain is Small ribosomal subunit protein uS11, found in Frankia alni (strain DSM 45986 / CECT 9034 / ACN14a).